Reading from the N-terminus, the 909-residue chain is Protein translocase subunit SecA (909 aa).

ATP contacts are provided by residues Gln87, 105–109 (GEGKT), and Asp512. Residues 863-909 (LVGGGDEDDESIAAHTPMIRDGDKVGRNDPCPCGSGRKYKQCHGKLS) form a disordered region. The segment covering 880–889 (MIRDGDKVGR) has biased composition (basic and acidic residues). 4 residues coordinate Zn(2+): Cys893, Cys895, Cys904, and His905. A compositionally biased stretch (basic residues) spans 899-909 (RKYKQCHGKLS).

The protein belongs to the SecA family. In terms of assembly, monomer and homodimer. Part of the essential Sec protein translocation apparatus which comprises SecA, SecYEG and auxiliary proteins SecDF-YajC and YidC. The cofactor is Zn(2+).

Its subcellular location is the cell inner membrane. The protein localises to the cytoplasm. The enzyme catalyses ATP + H2O + cellular proteinSide 1 = ADP + phosphate + cellular proteinSide 2.. Its function is as follows. Part of the Sec protein translocase complex. Interacts with the SecYEG preprotein conducting channel. Has a central role in coupling the hydrolysis of ATP to the transfer of proteins into and across the cell membrane, serving both as a receptor for the preprotein-SecB complex and as an ATP-driven molecular motor driving the stepwise translocation of polypeptide chains across the membrane. This Shewanella putrefaciens (strain CN-32 / ATCC BAA-453) protein is Protein translocase subunit SecA.